The primary structure comprises 267 residues: Non-homologous end joining protein Ku (267 aa).

Residues 11-195 (AVGQVSCAVA…KVKGEMLELA (185 aa)) form the Ku domain. The disordered stretch occupies residues 229–267 (GRKPKRKAAPKKAREPSDLMAALRESVAATERPRRRKAG).

It belongs to the prokaryotic Ku family. As to quaternary structure, homodimer. Interacts with LigD.

Functionally, with LigD forms a non-homologous end joining (NHEJ) DNA repair enzyme, which repairs dsDNA breaks with reduced fidelity. Binds linear dsDNA with 5'- and 3'- overhangs but not closed circular dsDNA nor ssDNA. Recruits and stimulates the ligase activity of LigD. This Cereibacter sphaeroides (strain KD131 / KCTC 12085) (Rhodobacter sphaeroides) protein is Non-homologous end joining protein Ku.